A 71-amino-acid chain; its full sequence is UPF0346 protein SPP_0954 (71 aa).

This sequence belongs to the UPF0346 family.

This Streptococcus pneumoniae (strain P1031) protein is UPF0346 protein SPP_0954.